A 357-amino-acid polypeptide reads, in one-letter code: Protein BIG GRAIN 1-like A (357 aa).

2 disordered regions span residues 1-146 (MEIT…KELG) and 208-233 (SSTC…GKSK). Over residues 75-87 (DFERSRRKTDFLR) the composition is skewed to basic and acidic residues. Composition is skewed to low complexity over residues 88–104 (HSNS…SSES) and 112–127 (KSSA…QPKP). Residues 129-139 (RTSSVDHSSAV) are compositionally biased toward polar residues. Positions 208 to 223 (SSTCSSASSFSRSCLS) are enriched in low complexity.

Belongs to the BIG GRAIN 1 (BG1) plant protein family.

The protein localises to the cell membrane. Functionally, involved in auxin transport. Regulator of the auxin signaling pathway. The sequence is that of Protein BIG GRAIN 1-like A from Arabidopsis thaliana (Mouse-ear cress).